The primary structure comprises 160 residues: ATP synthase subunit delta, mitochondrial (160 aa).

The N-terminal 22 residues, 1-22 (MFRQSLRSIARTRTGTIGVRTY), are a transit peptide targeting the mitochondrion.

As to quaternary structure, F-type ATP synthases have 2 components, the catalytic core F(1) and the membrane-embedded component F(0), linked together by a central stalk and a peripheral stalk. The central stalk, also called rotor shaft, is often seen as part of F(1). The peripheral stalk is seen as part of F(0). F(0) contains the membrane channel next to the rotor. F-type ATP synthases form dimers but each monomer functions independently in ATP generation. The dimer consists of 18 different polypeptides: ATP1 (subunit alpha, part of F(1), 3 molecules per monomer), ATP2 (subunit beta, part of F(1), 3 molecules per monomer), ATP3 (subunit gamma, part of the central stalk), ATP4 (subunit b, part of the peripheral stalk), ATP5/OSCP (subunit 5/OSCP, part of the peripheral stalk), ATP6 (subunit a, part of the peripheral stalk), ATP7 (subunit d, part of the peripheral stalk), ATP8 (subunit 8, part of the peripheral stalk), OLI1 (subunit c, part of the rotor, 10 molecules per monomer), ATP14 (subunit h, part of the peripheral stalk), ATP15 (subunit epsilon, part of the central stalk), ATP16 (subunit delta, part of the central stalk), ATP17 (subunit f, part of the peripheral stalk), ATP18 (subunit i/j, part of the peripheral stalk). Dimer-specific subunits are ATP19 (subunit k, at interface between monomers), ATP20 (subunit g, at interface between monomers), TIM11 (subunit e, at interface between monomers). Also contains subunit L.

Its subcellular location is the mitochondrion inner membrane. Functionally, mitochondrial membrane ATP synthase (F(1)F(0) ATP synthase or Complex V) produces ATP from ADP in the presence of a proton gradient across the membrane which is generated by electron transport complexes of the respiratory chain. F-type ATP synthases consist of two structural domains, F(1) - containing the extramembraneous catalytic core, and F(0) - containing the membrane proton channel, linked together by a central stalk and a peripheral stalk. During catalysis, ATP synthesis in the catalytic domain of F(1) is coupled via a rotary mechanism of the central stalk subunits to proton translocation. Part of the complex F(1) domain and the central stalk which is part of the complex rotary element. Rotation of the central stalk against the surrounding alpha/ATP1(3)beta/ATP2(3) subunits leads to hydrolysis of ATP in three separate catalytic sites on the beta/ATP2 subunits. The sequence is that of ATP synthase subunit delta, mitochondrial from Pichia angusta (Yeast).